The chain runs to 217 residues: Cysteine-rich protein 3 (217 aa).

In terms of domain architecture, LIM zinc-binding 1 spans 3–64 (WTCPRCQQPV…KPCYGALFGP (62 aa)). The tract at residues 84-112 (PGCTTPLSPSSFSPPRPRTGLPQGKKSPP) is disordered. Positions 122–183 (SLCPGCGEPV…VPCYGYLFGP (62 aa)) constitute an LIM zinc-binding 2 domain.

As to expression, expressed in most tissues, but not in skeletal muscle.

The protein localises to the cytoplasm. In Homo sapiens (Human), this protein is Cysteine-rich protein 3 (CRIP3).